Reading from the N-terminus, the 207-residue chain is Peptidyl-tRNA hydrolase (207 aa).

Tyr15 provides a ligand contact to tRNA. The active-site Proton acceptor is His20. Residues Phe66, Asn68, and Asn114 each coordinate tRNA. The tract at residues 187 to 207 (HTTKPPRPKPARPATAESDKG) is disordered. Low complexity predominate over residues 198-207 (RPATAESDKG).

It belongs to the PTH family. As to quaternary structure, monomer.

The protein localises to the cytoplasm. The enzyme catalyses an N-acyl-L-alpha-aminoacyl-tRNA + H2O = an N-acyl-L-amino acid + a tRNA + H(+). Functionally, hydrolyzes ribosome-free peptidyl-tRNAs (with 1 or more amino acids incorporated), which drop off the ribosome during protein synthesis, or as a result of ribosome stalling. Catalyzes the release of premature peptidyl moieties from peptidyl-tRNA molecules trapped in stalled 50S ribosomal subunits, and thus maintains levels of free tRNAs and 50S ribosomes. The sequence is that of Peptidyl-tRNA hydrolase from Delftia acidovorans (strain DSM 14801 / SPH-1).